The following is a 91-amino-acid chain: Small ribosomal subunit protein uS19 (91 aa).

It belongs to the universal ribosomal protein uS19 family.

Functionally, protein S19 forms a complex with S13 that binds strongly to the 16S ribosomal RNA. The chain is Small ribosomal subunit protein uS19 from Metamycoplasma hominis (strain ATCC 23114 / DSM 25592 / NBRC 14850 / NCTC 10111 / PG21) (Mycoplasma hominis).